A 433-amino-acid chain; its full sequence is Elongation factor 1-alpha (433 aa).

One can recognise a tr-type G domain in the interval Lys-5–Arg-227. The tract at residues Gly-14–Ser-21 is G1. Gly-14–Ser-21 contacts GTP. A Mg(2+)-binding site is contributed by Ser-21. Residues Gly-70–Asp-74 are G2. A G3 region spans residues Asp-91 to Gly-94. Residues Asp-91–His-95 and Asn-153–Asp-156 each bind GTP. Residues Asn-153–Asp-156 are G4. The G5 stretch occupies residues Ser-192 to Trp-194.

This sequence belongs to the TRAFAC class translation factor GTPase superfamily. Classic translation factor GTPase family. EF-Tu/EF-1A subfamily.

Its subcellular location is the cytoplasm. The enzyme catalyses GTP + H2O = GDP + phosphate + H(+). In terms of biological role, GTP hydrolase that promotes the GTP-dependent binding of aminoacyl-tRNA to the A-site of ribosomes during protein biosynthesis. The protein is Elongation factor 1-alpha of Thermofilum pendens (strain DSM 2475 / Hrk 5).